We begin with the raw amino-acid sequence, 111 residues long: Rho GDP-dissociation inhibitor 1 (111 aa).

Residues Lys57 and Lys60 each participate in a glycyl lysine isopeptide (Lys-Gly) (interchain with G-Cter in SUMO1); alternate cross-link. Residues Lys57 and Lys60 each participate in a glycyl lysine isopeptide (Lys-Gly) (interchain with G-Cter in SUMO2); alternate cross-link. Position 60 is an N6-acetyllysine; alternate (Lys60). N6-succinyllysine; alternate is present on Lys60.

Belongs to the Rho GDI family. As to quaternary structure, monomer. Interacts with FER. Interacts with PLXNB3. Forms a heterodimer with RAC1. Interacts with RHOA, the affinity is increased by three orders of magnitude when RHOA is prenylated. Interacts with PSMD10; the interaction increases ARHGDIA association with RHOA, leading to ARHGDIA-mediated inactivation of RHOA and ROCK and prolonged AKT activation. Interacts with KANK2; the interaction is direct and may regulate the interaction of ARHGDIA with RHOA, RAC1 and CDC42. Interacts with RHOC. Interacts with CDC42. Interacts with NGFR (via death domain); NGFR binding decreases the affinity for RHOA. The N-terminus is blocked.

The protein localises to the cytoplasm. In terms of biological role, controls Rho proteins homeostasis. Regulates the GDP/GTP exchange reaction of the Rho proteins by inhibiting the dissociation of GDP from them, and the subsequent binding of GTP to them. Retains Rho proteins such as CDC42, RAC1 and RHOA in an inactive cytosolic pool, regulating their stability and protecting them from degradation. Actively involved in the recycling and distribution of activated Rho GTPases in the cell, mediates extraction from membranes of both inactive and activated molecules due its exceptionally high affinity for prenylated forms. Through the modulation of Rho proteins, may play a role in cell motility regulation. In glioma cells, inhibits cell migration and invasion by mediating the signals of SEMA5A and PLXNB3 that lead to inactivation of RAC1. In Cavia porcellus (Guinea pig), this protein is Rho GDP-dissociation inhibitor 1 (ARHGDIA).